A 381-amino-acid polypeptide reads, in one-letter code: MSPPAGGAAAAADPASPVVLLAVQAAVRLLGAGHEDEAQLRKLQLKADPERPGRFRLGLLGIEPGAVSLEWPLESICYTIRGPNQHELQPPPGGPGTFSVHFLNSEEAQQWAALVRDATAEGQNGNDSTAPVPTPAMCPTSPPCSSVTPTPKATQPEMDLPQGSGNLKKEELATHLAQAIAGGDEKAAAQVAAILAQHHVALNVQLLEAWFPRGPIRLQVTVEDATSVLSSSSSAHVSLQIHPHCSIAALQEQVFSEFGFPPAVQRWVIGRCLCMPERSLASYGVSQDGDPAFLYLLSAPREVSGHSPQHSKMDRKLGCLFPQSLELPHNLQASSSSLPSPPQPGWSCPSCTFINASNRPGCEMCSTQRPCAWDPLTATST.

Residues 1-177 (MSPPAGGAAA…KKEELATHLA (177 aa)) form a self-association region. The span at 121–131 (EGQNGNDSTAP) shows a compositional bias: polar residues. The disordered stretch occupies residues 121-153 (EGQNGNDSTAPVPTPAMCPTSPPCSSVTPTPKA). Pro residues predominate over residues 132 to 142 (VPTPAMCPTSP). Residues 172–305 (LATHLAQAIA…LLSAPREVSG (134 aa)) form an interaction with SHANK1 region. Residues 216-285 (IRLQVTVEDA…PERSLASYGV (70 aa)) form the Ubiquitin-like domain. Phosphoserine is present on S307. The RanBP2-type zinc finger occupies 342 to 371 (PQPGWSCPSCTFINASNRPGCEMCSTQRPC).

In terms of assembly, monomer and homodimer. Component of the LUBAC complex (linear ubiquitin chain assembly complex) which consists of SHARPIN, RBCK1 and RNF31. LUBAC has a MW of approximately 600 kDa suggesting a heteromultimeric assembly of its subunits. Associates with the TNF-R1 signaling complex (TNF-RSC) in a stimulation-dependent manner. Interacts with EYA1, EYA2, SHANK1 and SHANK3 (via ANK repeats). In terms of tissue distribution, expressed in brain, spleen, lung, heart, skeletal muscle, kidney and testis (at protein level). Expressed in heart and testis.

Its subcellular location is the cytoplasm. The protein localises to the synapse. It functions in the pathway protein modification; protein ubiquitination. Functionally, component of the LUBAC complex which conjugates linear polyubiquitin chains in a head-to-tail manner to substrates and plays a key role in NF-kappa-B activation and regulation of inflammation. LUBAC conjugates linear polyubiquitin to IKBKG and RIPK1 and is involved in activation of the canonical NF-kappa-B and the JNK signaling pathways. Linear ubiquitination mediated by the LUBAC complex interferes with TNF-induced cell death and thereby prevents inflammation. LUBAC is recruited to the TNF-R1 signaling complex (TNF-RSC) following polyubiquitination of TNF-RSC components by BIRC2 and/or BIRC3 and to conjugate linear polyubiquitin to IKBKG and possibly other components contributing to the stability of the complex. The LUBAC complex is also involved in innate immunity by conjugating linear polyubiquitin chains at the surface of bacteria invading the cytosol to form the ubiquitin coat surrounding bacteria. LUBAC is not able to initiate formation of the bacterial ubiquitin coat, and can only promote formation of linear polyubiquitins on pre-existing ubiquitin. The bacterial ubiquitin coat acts as an 'eat-me' signal for xenophagy and promotes NF-kappa-B activation. Together with OTULIN, the LUBAC complex regulates the canonical Wnt signaling during angiogenesis. The protein is Sharpin (Sharpin) of Rattus norvegicus (Rat).